The following is a 62-amino-acid chain: Large ribosomal subunit protein bL28 (62 aa).

Belongs to the bacterial ribosomal protein bL28 family.

The sequence is that of Large ribosomal subunit protein bL28 from Staphylococcus epidermidis (strain ATCC 12228 / FDA PCI 1200).